The chain runs to 344 residues: Dihydroorotase (344 aa).

Zn(2+) contacts are provided by His-14 and His-16. Substrate is bound by residues 16 to 18 and Asn-42; that span reads HLR. Zn(2+) contacts are provided by Lys-100, His-137, and His-175. Lys-100 is subject to N6-carboxylysine. His-137 lines the substrate pocket. Leu-220 is a substrate binding site. Position 248 (Asp-248) interacts with Zn(2+). Residue Asp-248 is part of the active site. Substrate is bound by residues His-252 and Ala-264.

The protein belongs to the metallo-dependent hydrolases superfamily. DHOase family. Class II DHOase subfamily. As to quaternary structure, homodimer. Zn(2+) is required as a cofactor.

It catalyses the reaction (S)-dihydroorotate + H2O = N-carbamoyl-L-aspartate + H(+). It functions in the pathway pyrimidine metabolism; UMP biosynthesis via de novo pathway; (S)-dihydroorotate from bicarbonate: step 3/3. In terms of biological role, catalyzes the reversible cyclization of carbamoyl aspartate to dihydroorotate. The chain is Dihydroorotase from Cupriavidus metallidurans (strain ATCC 43123 / DSM 2839 / NBRC 102507 / CH34) (Ralstonia metallidurans).